The following is a 907-amino-acid chain: Envelope glycoprotein B (907 aa).

A signal peptide spans 1–24; the sequence is MESRIWCLVVCVNLCIVCLGAAVS. The Virion surface portion of the chain corresponds to 25-751; that stretch reads SSSTRGTSAT…EGVATFLKNP (727 aa). The segment at 29–62 is disordered; sequence RGTSATHSHHSSHTTSAAHSRSGSVSQRVTSSQT. Residues 41–62 are compositionally biased toward low complexity; the sequence is HTTSAAHSRSGSVSQRVTSSQT. N-linked (GlcNAc...) asparagine; by host glycans are attached at residues Asn-68, Asn-73, and Asn-85. Intrachain disulfides connect Cys-94–Cys-551, Cys-111–Cys-507, Cys-185–Cys-250, and Cys-344–Cys-391. The interval 152–158 is involved in fusion and/or binding to host membrane; that stretch reads SYAYIHT. Asn-208 is a glycosylation site (N-linked (GlcNAc...) asparagine; by host). An involved in fusion and/or binding to host membrane region spans residues 237-244; sequence GSTWLYRE. Asn-281, Asn-286, Asn-302, Asn-341, Asn-383, Asn-405, Asn-409, Asn-417, Asn-447, Asn-452, Asn-456, Asn-466, Asn-555, and Asn-586 each carry an N-linked (GlcNAc...) asparagine; by host glycan. An intrachain disulfide couples Cys-574 to Cys-611. The segment at 697 to 749 is hydrophobic membrane proximal region; sequence VEDKVVDPLPPYLKGLDDLMSGLGAAGKAVGVAIGAVGGAVASVVEGVATFLK. The helical transmembrane segment at 752–772 threads the bilayer; it reads FGAFTIILVAIAVVIITYLIY. Over 773–907 the chain is Intravirion; it reads TRQRRLCTQP…LKDSDEEENV (135 aa). Polar residues-rich tracts occupy residues 798 to 810 and 860 to 877; these read VTSGSTKDTSLQA and RAQQNGTDSLDGRTGTQD. Disordered stretches follow at residues 798-838 and 857-907; these read VTSG…TAAP and AEQR…EENV. Over residues 878-887 the composition is skewed to basic and acidic residues; the sequence is KGQKPNLLDR. The short motif at 895–898 is the Internalization motif element; it reads YRHL.

This sequence belongs to the herpesviridae glycoprotein B family. As to quaternary structure, homotrimer; disulfide-linked. Binds to heparan sulfate proteoglycans. Interacts with gH/gL heterodimer. Post-translationally, a proteolytic cleavage by host furin generates two subunits that remain linked by disulfide bonds.

Its subcellular location is the virion membrane. The protein resides in the host cell membrane. The protein localises to the host endosome membrane. It localises to the host Golgi apparatus membrane. Envelope glycoprotein that forms spikes at the surface of virion envelope. Essential for the initial attachment to heparan sulfate moieties of the host cell surface proteoglycans. Involved in fusion of viral and cellular membranes leading to virus entry into the host cell. Following initial binding to its host receptors, membrane fusion is mediated by the fusion machinery composed at least of gB and the heterodimer gH/gL. May be involved in the fusion between the virion envelope and the outer nuclear membrane during virion egress. This is Envelope glycoprotein B from Human cytomegalovirus (strain Merlin) (HHV-5).